We begin with the raw amino-acid sequence, 117 residues long: UPF0102 protein Clos_1471 (117 aa).

Belongs to the UPF0102 family.

The sequence is that of UPF0102 protein Clos_1471 from Alkaliphilus oremlandii (strain OhILAs) (Clostridium oremlandii (strain OhILAs)).